We begin with the raw amino-acid sequence, 363 residues long: S-adenosylmethionine:tRNA ribosyltransferase-isomerase (363 aa).

It belongs to the QueA family. In terms of assembly, monomer.

It is found in the cytoplasm. The catalysed reaction is 7-aminomethyl-7-carbaguanosine(34) in tRNA + S-adenosyl-L-methionine = epoxyqueuosine(34) in tRNA + adenine + L-methionine + 2 H(+). The protein operates within tRNA modification; tRNA-queuosine biosynthesis. Its function is as follows. Transfers and isomerizes the ribose moiety from AdoMet to the 7-aminomethyl group of 7-deazaguanine (preQ1-tRNA) to give epoxyqueuosine (oQ-tRNA). This chain is S-adenosylmethionine:tRNA ribosyltransferase-isomerase, found in Haemophilus influenzae (strain PittGG).